The primary structure comprises 134 residues: ATP synthase epsilon chain (134 aa).

Belongs to the ATPase epsilon chain family. As to quaternary structure, F-type ATPases have 2 components, CF(1) - the catalytic core - and CF(0) - the membrane proton channel. CF(1) has five subunits: alpha(3), beta(3), gamma(1), delta(1), epsilon(1). CF(0) has three main subunits: a, b and c.

It localises to the cell membrane. Functionally, produces ATP from ADP in the presence of a proton gradient across the membrane. This is ATP synthase epsilon chain from Anoxybacillus flavithermus (strain DSM 21510 / WK1).